Consider the following 179-residue polypeptide: MPRRRVIGQRKILPDPKFGSELLAKFVNILMVDGKKSTAESIVYSALETLAQRSGKSELEAFEVALENVRPTVEVKSRRVGGSTYQVPVEVRPVRRNALAMRWIVEAARKRGDKSMALRLANELSDAAENKGTAVKKREDVHRMAEANKAFAHYRWKSLRSFSHQAGASSKQPALGYLN.

Belongs to the universal ribosomal protein uS7 family. Part of the 30S ribosomal subunit. Contacts proteins S9 and S11.

Functionally, one of the primary rRNA binding proteins, it binds directly to 16S rRNA where it nucleates assembly of the head domain of the 30S subunit. Is located at the subunit interface close to the decoding center, probably blocks exit of the E-site tRNA. This is Small ribosomal subunit protein uS7 from Shigella flexneri serotype 5b (strain 8401).